A 305-amino-acid polypeptide reads, in one-letter code: Ribosomal RNA small subunit methyltransferase H (305 aa).

S-adenosyl-L-methionine is bound by residues 47–49, Asp-66, Phe-93, Asp-108, and Gln-115; that span reads GGH. Positions 280-305 are disordered; that stretch reads ASAEEQERNPRSRSAKLRIARKRSES. A compositionally biased stretch (basic residues) spans 290 to 305; it reads RSRSAKLRIARKRSES.

This sequence belongs to the methyltransferase superfamily. RsmH family.

It is found in the cytoplasm. The catalysed reaction is cytidine(1402) in 16S rRNA + S-adenosyl-L-methionine = N(4)-methylcytidine(1402) in 16S rRNA + S-adenosyl-L-homocysteine + H(+). Specifically methylates the N4 position of cytidine in position 1402 (C1402) of 16S rRNA. In Synechococcus sp. (strain WH7803), this protein is Ribosomal RNA small subunit methyltransferase H.